The following is an 852-amino-acid chain: Sarcoplasmic reticulum histidine-rich calcium-binding protein (852 aa).

A signal peptide spans 1 to 27 (MGCRGPWLHTCLLWAAVASLLLPPAVT). The residue at position 28 (glutamine 28) is a Pyrrolidone carboxylic acid. The span at 44 to 58 (AGAPGPSGEAAAAGL) shows a compositional bias: low complexity. The segment at 44 to 770 (AGAPGPSGEA…EDTGPEDTQE (727 aa)) is disordered. 2 tandem repeats follow at residues 59 to 79 (GHHGHSHRSPGEENEDVSMEN) and 80 to 100 (GHHFWSHRDHGETDDEVSREY). Residues 59–100 (GHHGHSHRSPGEENEDVSMENGHHFWSHRDHGETDDEVSREY) are 2 X approximate tandem repeats. Over residues 79 to 101 (NGHHFWSHRDHGETDDEVSREYG) the composition is skewed to basic and acidic residues. Serine 120 is modified (phosphoserine). Over residues 146-157 (LAEHGSHGHGHE) the composition is skewed to basic and acidic residues. Composition is skewed to acidic residues over residues 184–195 (EEGEEEEEEEEV), 208–217 (DEEDEDDDST), 233–246 (EEDEDDDDDEGDST), 261–275 (EEEDEEDDDDEGDST), 291–303 (EEDEDDDDEGDST), 319–332 (EEDDDDDDDEGDST), 348–360 (EEDEDDDDEGDST), 376–388 (EEDEDDDDEGDST), 404–416 (EEDEDDDDEGDST), 432–444 (EEDEEDDDEGDST), 459–468 (EEEDEDDDDE), and 484–497 (EDDGGDDDDGDDST). A run of 10 repeats spans residues 199-224 (HRHRGHGKEDEEDEDDDSTESDRHQA), 225-253 (HRHRGHREEEDEDDDDDEGDSTESDHHQA), 254-282 (HRHRGHEEEEDEEDDDDEGDSTESDRHQA), 283-310 (HRHRGHREEEDEDDDDEGDSTESDRHQA), 311-339 (HRHRGHREEEDDDDDDDEGDSTESDRHQA), 340-367 (HRHRGHREEEDEDDDDEGDSTESDRHQA), 368-395 (HRHRGHREEEDEDDDDEGDSTESDRHQA), 396-423 (HRHRGHREEEDEDDDDEGDSTESDHHQA), 424-451 (HRHRGHREEEDEEDDDEGDSTESDRHQA), and 452-470 (HRHRGHGEEEDEDDDDEGE). The 10 X tandem repeats, acidic stretch occupies residues 199–470 (HRHRGHGKED…EDEDDDDEGE (272 aa)). A 4 X approximate tandem repeats region spans residues 471-585 (HHHVPHRGHR…HHVASHPPPG (115 aa)). Positions 509–536 (HGKEEAEVTSDEHHHHVPDHGHQGHGDK) are enriched in basic and acidic residues. 3 positions are modified to phosphoserine: serine 518, serine 544, and serine 614. Basic and acidic residues-rich tracts occupy residues 587–619 (RSREGHAEEHQTEVPGHHQHRMGDTDTSAERGH), 630–646 (PPEDTVHHHRGSLKEEV), and 658–681 (DGSRVKRGGSEEEEEQKGTHHHSL). Residues 722–733 (EEEEEEEEEEEE) are compositionally biased toward acidic residues. The span at 746–757 (SGREAAGGASSE) shows a compositional bias: low complexity. The segment covering 758–769 (ESAEDTGPEDTQ) has biased composition (acidic residues). Positions 780–826 (CGYCTFCNRCTECEHCHCDEDSMGEHCDQCQHCQFCYLCPLVCETVC) are metal-binding.

It belongs to the HRC family. In terms of processing, the N-terminus is blocked.

Its subcellular location is the sarcoplasmic reticulum lumen. Functionally, may play a role in the regulation of calcium sequestration or release in the SR of skeletal and cardiac muscle. The chain is Sarcoplasmic reticulum histidine-rich calcium-binding protein (HRC) from Oryctolagus cuniculus (Rabbit).